Here is a 229-residue protein sequence, read N- to C-terminus: MNENVIALDGPAGSGKSTVARQIAEKIGFNYLDTGAFYRALTLYLFRLYQTSPNNRFEEWVKTSEAERSLSQIRIVCEFSAGNENRILLDGEDVSLAIRTPEITREIKHIANRRIYRDFVNKELHSLAKLHKLIMDGRDIGTEVFPDAKFKFYLTASSKVRAERRFLQLQEQGIFADRNEIEKEIILRDKSDMEREIAPLYQAKDAILIDTDILSKNSVISKILEILDQ.

Position 10-18 (10-18) interacts with ATP; the sequence is GPAGSGKST.

Belongs to the cytidylate kinase family. Type 1 subfamily.

The protein resides in the cytoplasm. It catalyses the reaction CMP + ATP = CDP + ADP. The enzyme catalyses dCMP + ATP = dCDP + ADP. This is Cytidylate kinase from Leptospira interrogans serogroup Icterohaemorrhagiae serovar Lai (strain 56601).